The primary structure comprises 294 residues: ATP phosphoribosyltransferase (294 aa).

This sequence belongs to the ATP phosphoribosyltransferase family. Long subfamily. Requires Mg(2+) as cofactor.

The protein localises to the cytoplasm. The catalysed reaction is 1-(5-phospho-beta-D-ribosyl)-ATP + diphosphate = 5-phospho-alpha-D-ribose 1-diphosphate + ATP. It participates in amino-acid biosynthesis; L-histidine biosynthesis; L-histidine from 5-phospho-alpha-D-ribose 1-diphosphate: step 1/9. Its activity is regulated as follows. Feedback inhibited by histidine. Its function is as follows. Catalyzes the condensation of ATP and 5-phosphoribose 1-diphosphate to form N'-(5'-phosphoribosyl)-ATP (PR-ATP). Has a crucial role in the pathway because the rate of histidine biosynthesis seems to be controlled primarily by regulation of HisG enzymatic activity. This is ATP phosphoribosyltransferase from Chlorobium phaeovibrioides (strain DSM 265 / 1930) (Prosthecochloris vibrioformis (strain DSM 265)).